The primary structure comprises 232 residues: RNA chaperone ProQ (232 aa).

The disordered stretch occupies residues 105–182 (EAKARVQAQR…REEQHTPVSD (78 aa)). The segment covering 117–136 (QQAKKREAAATAGEKEDAPR) has biased composition (basic and acidic residues). Over residues 137 to 146 (RERKPRPTTP) the composition is skewed to basic residues. Positions 147-177 (RRKEGAERKPRAQKPVEKAPKTVKAPREEQH) are enriched in basic and acidic residues.

Belongs to the ProQ family.

Its subcellular location is the cytoplasm. Functionally, RNA chaperone with significant RNA binding, RNA strand exchange and RNA duplexing activities. May regulate ProP activity through an RNA-based, post-transcriptional mechanism. The sequence is that of RNA chaperone ProQ from Escherichia coli (strain K12).